A 96-amino-acid polypeptide reads, in one-letter code: Keratin-associated protein 12-3 (96 aa).

Repeat copies occupy residues 10–14, 15–19, 24–28, 30–34, 35–39, 45–49, 50–54, 55–59, 60–64, 70–74, 75–79, 80–84, 85–89, and 90–94. A 14 X 5 AA approximate repeats region spans residues 10-94; sequence CQPTCCIHSP…CRPISCSTPS (85 aa).

The protein belongs to the KRTAP type 12 family. In terms of assembly, interacts with hair keratins. As to expression, restricted to a narrow region of the hair fiber cuticle, lying approximately 20 cell layers above the apex of the dermal papilla of the hair root; not detected in any other tissues.

In terms of biological role, in the hair cortex, hair keratin intermediate filaments are embedded in an interfilamentous matrix, consisting of hair keratin-associated proteins (KRTAP), which are essential for the formation of a rigid and resistant hair shaft through their extensive disulfide bond cross-linking with abundant cysteine residues of hair keratins. The matrix proteins include the high-sulfur and high-glycine-tyrosine keratins. The protein is Keratin-associated protein 12-3 (KRTAP12-3) of Homo sapiens (Human).